We begin with the raw amino-acid sequence, 178 residues long: Peptide deformylase (178 aa).

Positions 92 and 134 each coordinate Fe cation. Residue Glu135 is part of the active site. Position 138 (His138) interacts with Fe cation.

The protein belongs to the polypeptide deformylase family. Fe(2+) serves as cofactor.

The enzyme catalyses N-terminal N-formyl-L-methionyl-[peptide] + H2O = N-terminal L-methionyl-[peptide] + formate. Functionally, removes the formyl group from the N-terminal Met of newly synthesized proteins. Requires at least a dipeptide for an efficient rate of reaction. N-terminal L-methionine is a prerequisite for activity but the enzyme has broad specificity at other positions. The polypeptide is Peptide deformylase (Alkalilimnicola ehrlichii (strain ATCC BAA-1101 / DSM 17681 / MLHE-1)).